The chain runs to 320 residues: Olfactory receptor 2AT4 (320 aa).

The Extracellular segment spans residues 1-31; it reads MDATACNESVDGSPVFYLLGIPSLPETFFLP. The N-linked (GlcNAc...) asparagine glycan is linked to N7. A helical transmembrane segment spans residues 32-52; that stretch reads VFFIFLLFYLLILMGNALILV. The Cytoplasmic portion of the chain corresponds to 53–62; it reads AVVAEPSLHK. Residues 63-83 traverse the membrane as a helical segment; it reads PMYFFLINLSTLDILFTTTTV. Topologically, residues 84-102 are extracellular; that stretch reads PKMLSLFLLGDRFLSFSSC. An intrachain disulfide couples C102 to C184. The helical transmembrane segment at 103 to 123 threads the bilayer; the sequence is LLQMYLFQSFTCSEAFILVVM. Residues 124–145 lie on the Cytoplasmic side of the membrane; the sequence is AYDRYVAICHPLHYPVLMNPQT. The chain crosses the membrane as a helical span at residues 146-166; the sequence is NATLAASAWLTALLLPIPAVV. Residues 167 to 200 lie on the Extracellular side of the membrane; that stretch reads RTSQMAYNSIAYIYHCFCDHLAVVQASCSDTTPQ. A helical membrane pass occupies residues 201–221; that stretch reads TLMGFCIAMVVSFLPLLLVLL. Over 222–245 the chain is Cytoplasmic; sequence SYVHILASVLRISSLEGRAKAFST. The helical transmembrane segment at 246 to 266 threads the bilayer; it reads CSSHLLVVGTYYSSIAIAYVA. Topologically, residues 267–276 are extracellular; sequence YRADLPLDFH. A helical membrane pass occupies residues 277-297; sequence IMGNVVYAILTPILNPLIYTL. The Cytoplasmic segment spans residues 298–320; that stretch reads RNRDVKAAITKIMSQDPGCDRSI.

It belongs to the G-protein coupled receptor 1 family. As to expression, detected in the keratinocytes of the epidermis (at protein level). Detected in hair follicles in proximal outer root sheath and hair matrix keratinocytes (at protein level).

The protein resides in the cell membrane. Olfactory receptor. Activated by the synthetic sandalwood odorant sandalore. Endogenous ligand is unknown. The activity of this receptor is probably mediated by G proteins which induce elevation of intracellular Ca(2+), a cAMP-dependent pathway and phosphorylation of MAPK1/ERK2, MAPK3/ERK1 and p38 MAPKs. Activation of OR2AT4 induces proliferation, migration, and re-epithelialization during wound-healing processes of keratinocytes. Stimulation of OR2AT4 by sandalore promotes hair growth by decreasing apoptosis and increasing production of the anagen-prolonging growth factor IGF1 as well as other pathways involving various kinases. This is Olfactory receptor 2AT4 from Homo sapiens (Human).